The following is a 422-amino-acid chain: Glutamyl-tRNA reductase (422 aa).

Substrate is bound by residues 50-53, S110, 115-117, and Q121; these read TCNR and ETQ. C51 functions as the Nucleophile in the catalytic mechanism. Residue 190–195 participates in NADP(+) binding; it reads GAGEMS.

Belongs to the glutamyl-tRNA reductase family. Homodimer.

It catalyses the reaction (S)-4-amino-5-oxopentanoate + tRNA(Glu) + NADP(+) = L-glutamyl-tRNA(Glu) + NADPH + H(+). Its pathway is porphyrin-containing compound metabolism; protoporphyrin-IX biosynthesis; 5-aminolevulinate from L-glutamyl-tRNA(Glu): step 1/2. Its function is as follows. Catalyzes the NADPH-dependent reduction of glutamyl-tRNA(Glu) to glutamate 1-semialdehyde (GSA). This Campylobacter fetus subsp. fetus (strain 82-40) protein is Glutamyl-tRNA reductase.